A 368-amino-acid polypeptide reads, in one-letter code: MSNPTSTPRADGFRMPAEWEPHEQTWMVWPERPDNWRNGGKPAQAAFAAVAKAIARFEPVTVCASAGQYENARARLDDGNIRVVEISSDDAWVRDTGPTFVIDDKGDVRGVDWGFNAWGGFEGGLYFPWQRDDQVARKILEIERRARYRTDDFVLEGGSIHVDGEGTLITTEECLLNHNRNPHLSQAEIERTLRDYLAVESIIWLPNGLYNDETDGHVDNFCCYVRPGEVLLAWTDDQDDPNYLRCQAALRVLEESRDAKGRKLVVHKMPIPGPLYATQEECDGVDIVEGSQPRDPSIRLAGSYVNFLIVNGGIIAPSFDDPKDAEARAILQRVFPEHEVVMVPGREILLGGGNIHCITQQQPAPRKA.

The Amidino-cysteine intermediate role is filled by Cys357.

This sequence belongs to the agmatine deiminase family. As to quaternary structure, homodimer.

It carries out the reaction agmatine + H2O = N-carbamoylputrescine + NH4(+). It functions in the pathway amine and polyamine biosynthesis; putrescine biosynthesis via agmatine pathway; N-carbamoylputrescine from agmatine: step 1/1. Its function is as follows. Mediates the hydrolysis of agmatine into N-carbamoylputrescine in the arginine decarboxylase (ADC) pathway of putrescine biosynthesis, a basic polyamine. The protein is Agmatine deiminase of Pseudomonas aeruginosa (strain LESB58).